A 77-amino-acid chain; its full sequence is Small ribosomal subunit protein bS20 (77 aa).

Belongs to the bacterial ribosomal protein bS20 family.

Binds directly to 16S ribosomal RNA. The protein is Small ribosomal subunit protein bS20 of Streptococcus agalactiae serotype Ia (strain ATCC 27591 / A909 / CDC SS700).